A 217-amino-acid chain; its full sequence is Protein GrpE (217 aa).

The tract at residues 1–63 is disordered; sequence MAETSNSENK…AADSELSLQS (63 aa). Positions 10-32 are enriched in basic and acidic residues; that stretch reads KTSEEAKASEKNSRSITLEETKL. The segment covering 37–63 has biased composition (low complexity); sequence SEESTQTTESTQAQAAEAADSELSLQS.

Belongs to the GrpE family. Homodimer.

It localises to the cytoplasm. Functionally, participates actively in the response to hyperosmotic and heat shock by preventing the aggregation of stress-denatured proteins, in association with DnaK and GrpE. It is the nucleotide exchange factor for DnaK and may function as a thermosensor. Unfolded proteins bind initially to DnaJ; upon interaction with the DnaJ-bound protein, DnaK hydrolyzes its bound ATP, resulting in the formation of a stable complex. GrpE releases ADP from DnaK; ATP binding to DnaK triggers the release of the substrate protein, thus completing the reaction cycle. Several rounds of ATP-dependent interactions between DnaJ, DnaK and GrpE are required for fully efficient folding. The sequence is that of Protein GrpE from Leptospira borgpetersenii serovar Hardjo-bovis (strain JB197).